A 750-amino-acid chain; its full sequence is MADEISNPVDPSQSLKRPLEGEQLEEAHPPQPILPEDSAVTKAEKVERNGTNGDSVDNGEPSAKRVRIEEKNHKPTAADSRDRIRGIAPVKAEYLIQPAGSRSATDDRNPAENDDDAEGKPRGDERDNGGKKKKKAKGQNKDRQFGSWGDKIKLCNSISNSSEFSPKECSFGDSCKCEHNLRKYLAEGRRADLTTFNSKCPVWEDNGTCLAGWKCRFVGSHSKEIQREDGRMELVLIDDSDRMGDTALGYEEALGSVVNVISTKDKIDLAKKKTPMEKSDLYTTWLDQNSEEVNRQSNLRKDQKNDQTEEEKQENRARYVEPPFLPSEKRRIYFGPETPVLAPLTTQGNLPFRRLCVELGAQLTYSEMAMSIPLLQGQKSEWALMKAHKSEVTPPRVNSDRTSIVRKYDNSKDLKFGTQISASKPFMAIKAAEVLSRFVPHLRVIDLNCGCPIELVYRQGAGSALLDAPSKLEKMIRGMNAVSGEVPITAKIRMGTMTGKPTAFKTIERLAFGGVESRERLGAPGCAAITLHGRSRQQRYTKSADWSYIAECAALVKSYNQKKDDLTDTVMEPDARTLPNAPDGKIHFIGNGDCYSHIDYLDHIQNAGVDSVMVARGALIKPWLFEEIEKGQVLDKSASERLEYVEKFTRYGLEAWGSDEIGVGQTRRFLLEWLSFAHRYVPAGILEHLPPSLQDRPPAYRGRNDLETLLASDNYMDWMKISEMFLGPAHEGFKFQPKHKSNSYEIEAEG.

A disordered region spans residues 1 to 145 (MADEISNPVD…AKGQNKDRQF (145 aa)). Composition is skewed to basic and acidic residues over residues 17 to 28 (RPLEGEQLEEAH), 62 to 73 (SAKRVRIEEKNH), and 118 to 130 (EGKP…DNGG). 2 consecutive C3H1-type zinc fingers follow at residues 155 to 179 (CNSI…KCEH) and 200 to 221 (CPVW…VGSH). The segment at 292-319 (EVNRQSNLRKDQKNDQTEEEKQENRARY) is disordered. Residues 343-345 (PLT) and Gln419 contribute to the FMN site. Cys451 serves as the catalytic Proton donor. Residues Lys491, His532, 591 to 593 (NGD), and 615 to 616 (AR) each bind FMN.

Belongs to the Dus family. Dus3 subfamily. The cofactor is FMN.

It localises to the cytoplasm. It is found in the nucleus. It carries out the reaction 5,6-dihydrouridine(47) in tRNA + NAD(+) = uridine(47) in tRNA + NADH + H(+). It catalyses the reaction 5,6-dihydrouridine(47) in tRNA + NADP(+) = uridine(47) in tRNA + NADPH + H(+). The catalysed reaction is a 5,6-dihydrouridine in mRNA + NAD(+) = a uridine in mRNA + NADH + H(+). The enzyme catalyses a 5,6-dihydrouridine in mRNA + NADP(+) = a uridine in mRNA + NADPH + H(+). In terms of biological role, catalyzes the synthesis of dihydrouridine, a modified base found in the D-loop of most tRNAs. Specifically modifies U47 in cytoplasmic tRNAs. Catalyzes the synthesis of dihydrouridine in some mRNAs, thereby affecting their translation. In Botryotinia fuckeliana (strain B05.10) (Noble rot fungus), this protein is tRNA-dihydrouridine(47) synthase [NAD(P)(+)] (dus3).